We begin with the raw amino-acid sequence, 157 residues long: 2-amino-4-hydroxy-6-hydroxymethyldihydropteridine pyrophosphokinase (157 aa).

The protein belongs to the HPPK family.

It carries out the reaction 6-hydroxymethyl-7,8-dihydropterin + ATP = (7,8-dihydropterin-6-yl)methyl diphosphate + AMP + H(+). It functions in the pathway cofactor biosynthesis; tetrahydrofolate biosynthesis; 2-amino-4-hydroxy-6-hydroxymethyl-7,8-dihydropteridine diphosphate from 7,8-dihydroneopterin triphosphate: step 4/4. Functionally, catalyzes the transfer of pyrophosphate from adenosine triphosphate (ATP) to 6-hydroxymethyl-7,8-dihydropterin, an enzymatic step in folate biosynthesis pathway. The sequence is that of 2-amino-4-hydroxy-6-hydroxymethyldihydropteridine pyrophosphokinase (folK) from Campylobacter jejuni subsp. jejuni serotype O:2 (strain ATCC 700819 / NCTC 11168).